The primary structure comprises 371 residues: Peptidyl-prolyl cis-trans isomerase D (371 aa).

The region spanning 8 to 172 is the PPIase cyclophilin-type domain; that stretch reads FFDIAIGGQL…EPVVIADCGQ (165 aa). The tract at residues 175 to 202 is disordered; that stretch reads SDDPFLAERTSTDGDPYEDYPDDEDQEL. Acidic residues predominate over residues 189–201; sequence DPYEDYPDDEDQE. TPR repeat units lie at residues 212 to 245, 265 to 303, and 308 to 341; these read AKTI…LDVH, APLL…LELS, and AKAY…LPED.

This sequence belongs to the cyclophilin-type PPIase family. PPIase D subfamily.

Its subcellular location is the cytoplasm. It catalyses the reaction [protein]-peptidylproline (omega=180) = [protein]-peptidylproline (omega=0). In terms of biological role, PPIases accelerate the folding of proteins. It catalyzes the cis-trans isomerization of proline imidic peptide bonds in oligopeptides. This chain is Peptidyl-prolyl cis-trans isomerase D (Cyp40), found in Amanita muscaria (Fly agaric).